The primary structure comprises 51 residues: Proteinase inhibitor PTI (51 aa).

4 disulfides stabilise this stretch: cysteine 3-cysteine 40, cysteine 6-cysteine 24, cysteine 7-cysteine 36, and cysteine 13-cysteine 49.

The protein belongs to the protease inhibitor I20 (potato type II proteinase inhibitor) family.

Its subcellular location is the secreted. This chain is Proteinase inhibitor PTI, found in Solanum tuberosum (Potato).